Reading from the N-terminus, the 392-residue chain is Alpha-(1,3)-fucosyltransferase fut-6 (392 aa).

Residues 1–12 are Cytoplasmic-facing; it reads MSQIGGATCTWR. The helical; Signal-anchor for type II membrane protein transmembrane segment at 13–35 threads the bilayer; that stretch reads YLGRFVTLGIYASVALFVWYTLV. Topologically, residues 36 to 392 are lumenal; sequence PTRSKHKDSI…CNNQIASKYL (357 aa). A glycan (N-linked (GlcNAc...) asparagine) is linked at asparagine 158.

It belongs to the glycosyltransferase 10 family. Requires Unlike other alpha-(1,3)-fucosyltransferases, appears not to require a divalent metal cation as cofactor. as cofactor.

It is found in the golgi apparatus. The protein localises to the golgi stack membrane. It functions in the pathway protein modification; protein glycosylation. Inhibited by divalent metal cations. Functionally, involved in the fucosylation of N-glycans. Preferentially catalyzes the addition of fucose in alpha 1-3 linkage to the distal GlcNAc residue in N-glycans. Catalyzes the transfer of fucose to Gal-beta-1-4-GlcNAc-alpha-pNP (LN-pNP) and Gal-beta-1-4-GlcNAc-beta-1-3-Gal-beta-1-4-Glc (LNnT). Unlike alpha-(1,3)-fucosyltransferase fut-1, does not transfer fucose to Man-alpha-1-3-(Man-alpha-1-6)-Man-beta-1-4-GlcNAc-beta-1-4-GlcNAc-beta-1-Asn (M3), Man-alpha-1-3-(Man-alpha-1-6)-Man-beta-1-4-GlcNAc-beta-1-4-(Fuc-alpha-1-6)-GlcNAc-beta-1-Asn (M3F6) and GlcNAc-beta-1-2-Man-alpha-1-3-(GlcNAc-beta-1-2-Man-alpha-1-6)-Man-beta-1-4-GlcNAc-beta-1-4(Fuc-alpha-1-6)-GlcNAc-beta-1-Asn (GnM3F6). In Caenorhabditis elegans, this protein is Alpha-(1,3)-fucosyltransferase fut-6.